The chain runs to 356 residues: tRNA N6-adenosine threonylcarbamoyltransferase (356 aa).

2 residues coordinate Fe cation: His115 and His119. Residues 138–142 (LVSGG), Asp171, Gly184, and Asn283 contribute to the substrate site. Asp311 contacts Fe cation.

Belongs to the KAE1 / TsaD family. It depends on Fe(2+) as a cofactor.

It localises to the cytoplasm. The enzyme catalyses L-threonylcarbamoyladenylate + adenosine(37) in tRNA = N(6)-L-threonylcarbamoyladenosine(37) in tRNA + AMP + H(+). Required for the formation of a threonylcarbamoyl group on adenosine at position 37 (t(6)A37) in tRNAs that read codons beginning with adenine. Is involved in the transfer of the threonylcarbamoyl moiety of threonylcarbamoyl-AMP (TC-AMP) to the N6 group of A37, together with TsaE and TsaB. TsaD likely plays a direct catalytic role in this reaction. In Prochlorococcus marinus (strain MIT 9301), this protein is tRNA N6-adenosine threonylcarbamoyltransferase.